The primary structure comprises 557 residues: Formate--tetrahydrofolate ligase 2 (557 aa).

66 to 73 provides a ligand contact to ATP; it reads TPAGEGKT.

This sequence belongs to the formate--tetrahydrofolate ligase family.

The enzyme catalyses (6S)-5,6,7,8-tetrahydrofolate + formate + ATP = (6R)-10-formyltetrahydrofolate + ADP + phosphate. It functions in the pathway one-carbon metabolism; tetrahydrofolate interconversion. In Streptococcus pyogenes serotype M6 (strain ATCC BAA-946 / MGAS10394), this protein is Formate--tetrahydrofolate ligase 2.